Here is a 127-residue protein sequence, read N- to C-terminus: Large ribosomal subunit protein bL20 (127 aa).

This sequence belongs to the bacterial ribosomal protein bL20 family.

In terms of biological role, binds directly to 23S ribosomal RNA and is necessary for the in vitro assembly process of the 50S ribosomal subunit. It is not involved in the protein synthesizing functions of that subunit. The protein is Large ribosomal subunit protein bL20 of Corynebacterium aurimucosum (strain ATCC 700975 / DSM 44827 / CIP 107346 / CN-1) (Corynebacterium nigricans).